The sequence spans 517 residues: Retinal dehydrogenase 2 (517 aa).

Residues 184-186 (IPW), 210-213 (KPAE), and 264-266 (STE) contribute to the NAD(+) site. Glu-286 functions as the Proton acceptor in the catalytic mechanism. The active-site Nucleophile is Cys-320. NAD(+) contacts are provided by residues 366–370 (KQYNK) and Glu-417.

The protein belongs to the aldehyde dehydrogenase family. As to quaternary structure, homotetramer. Expressed in the high vocal center (HVC) which integrates auditory and motor activities and constitutes a nodal nucleus on the song system.

It is found in the cytoplasm. It catalyses the reaction retinal + NAD(+) + H2O = retinoate + NADH + 2 H(+). The enzyme catalyses all-trans-retinal + NAD(+) + H2O = all-trans-retinoate + NADH + 2 H(+). The catalysed reaction is all-trans-13,14-dihydroretinal + NAD(+) + H2O = all-trans-13,14-dihydroretinoate + NADH + 2 H(+). It participates in cofactor metabolism; retinol metabolism. In terms of biological role, catalyzes the NAD-dependent oxidation of aldehyde substrates, such as all-trans-retinal and all-trans-13,14-dihydroretinal, to their corresponding carboxylic acids, all-trans-retinoate and all-trans-13,14-dihydroretinoate, respectively. Retinoate signaling is critical for the transcriptional control of many genes, for instance it is crucial for initiation of meiosis in both male and female. Recognizes retinal as substrate, both in its free form and when bound to cellular retinol-binding protein. Lacks activity with benzaldehyde, acetaldehyde and octanal. Displays complete lack of activity with citral. Plays a significant role in the acquisition and production of learned songs. The chain is Retinal dehydrogenase 2 (ALDH1A2) from Taeniopygia guttata (Zebra finch).